The primary structure comprises 243 residues: Triosephosphate isomerase (243 aa).

9-11 serves as a coordination point for substrate; that stretch reads NWK. Residue His-96 is the Electrophile of the active site. Glu-165 (proton acceptor) is an active-site residue. Substrate is bound by residues Gly-171, Ser-204, and 225 to 226; that span reads GG.

It belongs to the triosephosphate isomerase family. In terms of assembly, homodimer.

It localises to the cytoplasm. The enzyme catalyses D-glyceraldehyde 3-phosphate = dihydroxyacetone phosphate. It participates in carbohydrate biosynthesis; gluconeogenesis. The protein operates within carbohydrate degradation; glycolysis; D-glyceraldehyde 3-phosphate from glycerone phosphate: step 1/1. Involved in the gluconeogenesis. Catalyzes stereospecifically the conversion of dihydroxyacetone phosphate (DHAP) to D-glyceraldehyde-3-phosphate (G3P). The sequence is that of Triosephosphate isomerase from Prochlorococcus marinus (strain MIT 9313).